The following is a 601-amino-acid chain: Sulfite reductase [NADPH] flavoprotein alpha-component (601 aa).

Residues 64–202 enclose the Flavodoxin-like domain; that stretch reads ITLISASQTG…SAQQWRQQIV (139 aa). FMN is bound by residues 70-75, 117-120, and 153-162; these read SQTGNA, STQG, and LGDTSYEHFC. The region spanning 236 to 450 is the FAD-binding FR-type domain; the sequence is AAPLTAQLSV…IEHNDNFRLP (215 aa). FAD is bound by residues threonine 324, lysine 358, 388–391, 406–408, tyrosine 412, and 421–424; these read RLYS, TVG, and GGAS. NADP(+)-binding positions include 521–522, 527–531, and aspartate 563; these read SR and KIYVQ. Tyrosine 601 is a binding site for FAD.

It belongs to the NADPH-dependent sulphite reductase flavoprotein subunit CysJ family. In the N-terminal section; belongs to the flavodoxin family. The protein in the C-terminal section; belongs to the flavoprotein pyridine nucleotide cytochrome reductase family. Alpha(8)-beta(8). The alpha component is a flavoprotein, the beta component is a hemoprotein. FAD is required as a cofactor. It depends on FMN as a cofactor.

The enzyme catalyses hydrogen sulfide + 3 NADP(+) + 3 H2O = sulfite + 3 NADPH + 4 H(+). The protein operates within sulfur metabolism; hydrogen sulfide biosynthesis; hydrogen sulfide from sulfite (NADPH route): step 1/1. In terms of biological role, component of the sulfite reductase complex that catalyzes the 6-electron reduction of sulfite to sulfide. This is one of several activities required for the biosynthesis of L-cysteine from sulfate. The flavoprotein component catalyzes the electron flow from NADPH -&gt; FAD -&gt; FMN to the hemoprotein component. The sequence is that of Sulfite reductase [NADPH] flavoprotein alpha-component from Yersinia enterocolitica serotype O:8 / biotype 1B (strain NCTC 13174 / 8081).